Consider the following 469-residue polypeptide: A-type ATP synthase subunit B 3 (469 aa).

This sequence belongs to the ATPase alpha/beta chains family. As to quaternary structure, has multiple subunits with at least A(3), B(3), C, D, E, F, H, I and proteolipid K(x).

The protein resides in the cell membrane. Component of the A-type ATP synthase that produces ATP from ADP in the presence of a proton gradient across the membrane. The B chain is a regulatory subunit. The polypeptide is A-type ATP synthase subunit B 3 (Methanospirillum hungatei JF-1 (strain ATCC 27890 / DSM 864 / NBRC 100397 / JF-1)).